Here is a 115-residue protein sequence, read N- to C-terminus: NADH-ubiquinone oxidoreductase chain 3 (115 aa).

3 helical membrane-spanning segments follow: residues 1-21 (MITL…LLII), 55-75 (FFLV…LFPL), and 87-107 (AIIL…YEWL).

Belongs to the complex I subunit 3 family.

The protein localises to the mitochondrion membrane. The catalysed reaction is a ubiquinone + NADH + 5 H(+)(in) = a ubiquinol + NAD(+) + 4 H(+)(out). Functionally, core subunit of the mitochondrial membrane respiratory chain NADH dehydrogenase (Complex I) that is believed to belong to the minimal assembly required for catalysis. Complex I functions in the transfer of electrons from NADH to the respiratory chain. The immediate electron acceptor for the enzyme is believed to be ubiquinone. This is NADH-ubiquinone oxidoreductase chain 3 (MT-ND3) from Myxine glutinosa (Atlantic hagfish).